Here is a 368-residue protein sequence, read N- to C-terminus: Glutaminyl-peptide cyclotransferase (368 aa).

Residues 1-33 (MARERRDSKAATFFCLAWALCLALPGFPQHVSG) form the signal peptide. The N-linked (GlcNAc...) asparagine glycan is linked to N53. A disulfide bond links C143 and C169. Zn(2+) is bound at residue D164. E207 serves as the catalytic Proton acceptor. E208 is a binding site for Zn(2+). Residue D254 is the Proton acceptor of the active site. N292 is a glycosylation site (N-linked (GlcNAc...) asparagine). Residue H336 participates in Zn(2+) binding. N352 carries N-linked (GlcNAc...) asparagine glycosylation.

It belongs to the glutaminyl-peptide cyclotransferase family. In terms of tissue distribution, expressed by the venom gland.

It localises to the secreted. The enzyme catalyses N-terminal L-glutaminyl-[peptide] = N-terminal 5-oxo-L-prolyl-[peptide] + NH4(+). Responsible for the biosynthesis of pyroglutamyl peptides. Has a bias against acidic and tryptophan residues adjacent to the N-terminal glutaminyl residue and a lack of importance of chain length after the second residue. Also catalyzes N-terminal pyroglutamate formation. The polypeptide is Glutaminyl-peptide cyclotransferase (QPCT) (Gloydius blomhoffii (Mamushi)).